The primary structure comprises 365 residues: Homeobox protein knotted-1-like 7 (365 aa).

The span at 1–11 (MEELEGHRGEG) shows a compositional bias: basic and acidic residues. The interval 1–20 (MEELEGHRGEGRLPPPPPLL) is disordered. The region spanning 227 to 247 (ALKRHLLRKYSGYLGGLRKEL) is the ELK domain. Positions 248-311 (SKKRKKGKLP…NQRKRHWKPT (64 aa)) form a DNA-binding region, homeobox; TALE-type.

The protein belongs to the TALE/KNOX homeobox family.

The protein resides in the nucleus. Probable transcription factor that may be involved in shoot formation during embryogenesis. The sequence is that of Homeobox protein knotted-1-like 7 (OSH3) from Oryza sativa subsp. japonica (Rice).